We begin with the raw amino-acid sequence, 124 residues long: Small ribosomal subunit protein uS12 (124 aa).

D89 bears the 3-methylthioaspartic acid mark.

This sequence belongs to the universal ribosomal protein uS12 family. Part of the 30S ribosomal subunit. Contacts proteins S8 and S17. May interact with IF1 in the 30S initiation complex.

With S4 and S5 plays an important role in translational accuracy. In terms of biological role, interacts with and stabilizes bases of the 16S rRNA that are involved in tRNA selection in the A site and with the mRNA backbone. Located at the interface of the 30S and 50S subunits, it traverses the body of the 30S subunit contacting proteins on the other side and probably holding the rRNA structure together. The combined cluster of proteins S8, S12 and S17 appears to hold together the shoulder and platform of the 30S subunit. The protein is Small ribosomal subunit protein uS12 (rpsL) of Mannheimia haemolytica (Pasteurella haemolytica).